The following is a 195-amino-acid chain: uncharacterized protein (195 aa).

Residues 34–165 (SHHAAVLIPI…WLDIHRGGVN (132 aa)) enclose the Nudix hydrolase domain. Positions 72–94 (GKADPQDSSLIETALREAEEEVA) match the Nudix box motif. Residues Glu88 and Glu92 each coordinate Mg(2+).

Belongs to the Nudix hydrolase family. PCD1 subfamily. Requires Mn(2+) as cofactor. It depends on Mg(2+) as a cofactor.

Probably mediates the hydrolysis of some nucleoside diphosphate derivatives. This is an uncharacterized protein from Yersinia enterocolitica serotype O:8 / biotype 1B (strain NCTC 13174 / 8081).